We begin with the raw amino-acid sequence, 157 residues long: Ubiquitin-like protein 4A (157 aa).

The Ubiquitin-like domain maps to 1 to 76 (MQLTVKALQG…LNLVVKPLEK (76 aa)). Lys-48 is covalently cross-linked (Glycyl lysine isopeptide (Lys-Gly) (interchain with G-Cter in ubiquitin)). At Ser-90 the chain carries Phosphoserine. The segment at 96–138 (WHLISKVLARHFSAADASRVLEQLQRDYERSLSRLTLDDIERL) is required and sufficient for interaction with BAG6.

As to quaternary structure, component of the BAG6/BAT3 complex, at least composed of BAG6, UBL4A and GET4/TRC35. Interacts with BAG6; the interaction is direct and required for UBL4A protein stability. Interacts with USP13; may be indirect via BAG6. Post-translationally, polyubiquitinated. Ubiquitination by AMFR and deubiquitination by USP13 may regulate the interaction between the BAG6/BAT3 complex and SGTA and therefore may regulate client proteins fate.

The protein resides in the cytoplasm. It localises to the cytosol. The protein localises to the nucleus. As part of a cytosolic protein quality control complex, the BAG6/BAT3 complex, maintains misfolded and hydrophobic patches-containing proteins in a soluble state and participates in their proper delivery to the endoplasmic reticulum or alternatively can promote their sorting to the proteasome where they undergo degradation. The BAG6/BAT3 complex is involved in the post-translational delivery of tail-anchored/type II transmembrane proteins to the endoplasmic reticulum membrane. Recruited to ribosomes, it interacts with the transmembrane region of newly synthesized tail-anchored proteins and together with SGTA and ASNA1 mediates their delivery to the endoplasmic reticulum. Client proteins that cannot be properly delivered to the endoplasmic reticulum are ubiquitinated and sorted to the proteasome. Similarly, the BAG6/BAT3 complex also functions as a sorting platform for proteins of the secretory pathway that are mislocalized to the cytosol either delivering them to the proteasome for degradation or to the endoplasmic reticulum. The BAG6/BAT3 complex also plays a role in the endoplasmic reticulum-associated degradation (ERAD), a quality control mechanism that eliminates unwanted proteins of the endoplasmic reticulum through their retrotranslocation to the cytosol and their targeting to the proteasome. It maintains these retrotranslocated proteins in an unfolded yet soluble state condition in the cytosol to ensure their proper delivery to the proteasome. This chain is Ubiquitin-like protein 4A (UBL4A), found in Oryctolagus cuniculus (Rabbit).